The primary structure comprises 89 residues: MIYISEFIGRHVEVIQSSNRYDVGISGQVSFETKNTFEITKGTGKVIVPKEGRIFTFDGKFKVDGSLINYRPEDRLREYRKILKKLGGN.

Belongs to the eukaryotic/archaeal RNase P protein component 1 family. Consists of a catalytic RNA component and at least 4-5 protein subunits.

The protein localises to the cytoplasm. It catalyses the reaction Endonucleolytic cleavage of RNA, removing 5'-extranucleotides from tRNA precursor.. Its function is as follows. Part of ribonuclease P, a protein complex that generates mature tRNA molecules by cleaving their 5'-ends. This is Ribonuclease P protein component 1 from Thermoplasma volcanium (strain ATCC 51530 / DSM 4299 / JCM 9571 / NBRC 15438 / GSS1).